The sequence spans 778 residues: Endonuclease MutS2 (778 aa).

An ATP-binding site is contributed by 328–335 (GPNTGGKT). One can recognise a Smr domain in the interval 703–778 (LDLRGKRYEE…GSGCTIANLG (76 aa)).

Belongs to the DNA mismatch repair MutS family. MutS2 subfamily. As to quaternary structure, homodimer. Binds to stalled ribosomes, contacting rRNA.

Its function is as follows. Endonuclease that is involved in the suppression of homologous recombination and thus may have a key role in the control of bacterial genetic diversity. Acts as a ribosome collision sensor, splitting the ribosome into its 2 subunits. Detects stalled/collided 70S ribosomes which it binds and splits by an ATP-hydrolysis driven conformational change. Acts upstream of the ribosome quality control system (RQC), a ribosome-associated complex that mediates the extraction of incompletely synthesized nascent chains from stalled ribosomes and their subsequent degradation. Probably generates substrates for RQC. This is Endonuclease MutS2 from Streptococcus equi subsp. equi (strain 4047).